The primary structure comprises 950 residues: Protocadherin alpha-3 (950 aa).

The first 29 residues, 1-29 (MLFSWREDPGAQCLLLSLLLLAASEVGSG), serve as a signal peptide directing secretion. Cadherin domains lie at 30 to 133 (QLHY…APVF), 134 to 242 (PMSV…APAF), 243 to 350 (ERTI…VPEL), 351 to 455 (VIHS…APAF), 456 to 565 (SQSE…APAL), and 581 to 678 (VPRS…APKA). Residues 30–697 (QLHYSVSEEA…GPEAALVDVN (668 aa)) are Extracellular-facing. N-linked (GlcNAc...) asparagine glycosylation is found at Asn-257 and Asn-265. A glycan (N-linked (GlcNAc...) asparagine) is linked at Asn-548. The helical transmembrane segment at 698-718 (VYLIVAICAVSSLLVLTLLLY) threads the bilayer. Residues 719-950 (TALRCSAPPT…GNSTTDNSDQ (232 aa)) are Cytoplasmic-facing. PXXP repeat units lie at residues 734 to 737 (PGKP) and 774 to 777 (PSLP). The interval 734 to 894 (PGKPTLVCSS…PDKFIIPGSP (161 aa)) is 6 X 4 AA repeats of P-X-X-P. 3 disordered regions span residues 777–806 (PPCP…NPDW), 831–856 (GPGG…EVSP), and 869–889 (FKYG…DKFI). Over residues 782–797 (SRDREEKQDVDVDLSA) the composition is skewed to basic and acidic residues. 4 PXXP repeats span residues 799-802 (PRQP), 832-835 (PGGP), 873-876 (PGNP), and 891-894 (PGSP). The segment at 901 to 950 (QEPANSQIDKSDFITFGKKEETKKKKKKKKGNKTQEKKEKGNSTTDNSDQ) is disordered. Positions 909 to 923 (DKSDFITFGKKEETK) are enriched in basic and acidic residues.

It localises to the cell membrane. Functionally, potential calcium-dependent cell-adhesion protein. May be involved in the establishment and maintenance of specific neuronal connections in the brain. This chain is Protocadherin alpha-3 (PCDHA3), found in Pan troglodytes (Chimpanzee).